The chain runs to 136 residues: Protein PsiE (136 aa).

The next 4 helical transmembrane spans lie at 15 to 35, 55 to 75, 82 to 102, and 108 to 128; these read ILQN…VLFL, YELV…ALIV, FHFP…RLII, and PMDV…LWLC.

The protein belongs to the PsiE family.

The protein localises to the cell inner membrane. The chain is Protein PsiE from Salmonella arizonae (strain ATCC BAA-731 / CDC346-86 / RSK2980).